Consider the following 30-residue polypeptide: Kappa-sparatoxin-Hv1d (30 aa).

3 disulfide bridges follow: C3-C17, C10-C22, and C16-C26.

As to expression, expressed by the venom gland.

It is found in the secreted. In terms of biological role, inhibitor of voltage-gated potassium channels of the Kv4/KCND family. Blocks calcium channels (Cav). The chain is Kappa-sparatoxin-Hv1d from Heteropoda venatoria (Brown huntsman spider).